The chain runs to 753 residues: Oligopeptide transporter 5 (753 aa).

15 helical membrane passes run 56–76 (TWFL…FFGY), 80–100 (PLTV…KLMA), 132–152 (ITIF…LTIV), 163–183 (AAAM…AGMF), 224–244 (FFLI…YLFP), 296–316 (FFAI…ILPI), 368–388 (YLSI…TATI), 432–452 (WWFV…CEGF), 461–481 (WGLL…GVIL), 506–528 (PLAN…YFVG), 544–564 (FIVQ…TTWW), 583–603 (PWTC…GIIG), 615–635 (PGMN…WFFA), 662–682 (AKAV…YYIF), and 695–715 (ILSA…YFAL).

The protein belongs to the oligopeptide OPT transporter (TC 2.A.67.1) family. As to expression, expressed predominantly in flowers, and at a very low level in leaves and roots.

It localises to the membrane. Functionally, involved in the translocation of tetra- and pentapeptides across the cellular membrane in an energy-dependent manner. The polypeptide is Oligopeptide transporter 5 (OPT5) (Arabidopsis thaliana (Mouse-ear cress)).